A 456-amino-acid chain; its full sequence is Bifunctional protein GlmU (456 aa).

The interval 1-231 is pyrophosphorylase; the sequence is MERTCLAIIL…EEELTGCNTR (231 aa). UDP-N-acetyl-alpha-D-glucosamine contacts are provided by residues 10–13, K24, Q77, and 82–83; these read LAAG and GT. Mg(2+) is bound at residue D107. Positions 143, 157, 172, and 229 each coordinate UDP-N-acetyl-alpha-D-glucosamine. A Mg(2+)-binding site is contributed by N229. The segment at 232 to 252 is linker; sequence AELAYIERLWQQRRRQELMLA. Residues 253-456 form an N-acetyltransferase region; sequence GVSMVAPETV…AARKKVKAAE (204 aa). UDP-N-acetyl-alpha-D-glucosamine is bound by residues R318 and K336. H348 functions as the Proton acceptor in the catalytic mechanism. Residues Y351 and N362 each contribute to the UDP-N-acetyl-alpha-D-glucosamine site. Acetyl-CoA-binding positions include A365, 371-372, S390, S408, and R425; that span reads NY.

In the N-terminal section; belongs to the N-acetylglucosamine-1-phosphate uridyltransferase family. This sequence in the C-terminal section; belongs to the transferase hexapeptide repeat family. In terms of assembly, homotrimer. It depends on Mg(2+) as a cofactor.

The protein localises to the cytoplasm. The enzyme catalyses alpha-D-glucosamine 1-phosphate + acetyl-CoA = N-acetyl-alpha-D-glucosamine 1-phosphate + CoA + H(+). The catalysed reaction is N-acetyl-alpha-D-glucosamine 1-phosphate + UTP + H(+) = UDP-N-acetyl-alpha-D-glucosamine + diphosphate. It functions in the pathway nucleotide-sugar biosynthesis; UDP-N-acetyl-alpha-D-glucosamine biosynthesis; N-acetyl-alpha-D-glucosamine 1-phosphate from alpha-D-glucosamine 6-phosphate (route II): step 2/2. The protein operates within nucleotide-sugar biosynthesis; UDP-N-acetyl-alpha-D-glucosamine biosynthesis; UDP-N-acetyl-alpha-D-glucosamine from N-acetyl-alpha-D-glucosamine 1-phosphate: step 1/1. It participates in bacterial outer membrane biogenesis; LPS lipid A biosynthesis. Its function is as follows. Catalyzes the last two sequential reactions in the de novo biosynthetic pathway for UDP-N-acetylglucosamine (UDP-GlcNAc). The C-terminal domain catalyzes the transfer of acetyl group from acetyl coenzyme A to glucosamine-1-phosphate (GlcN-1-P) to produce N-acetylglucosamine-1-phosphate (GlcNAc-1-P), which is converted into UDP-GlcNAc by the transfer of uridine 5-monophosphate (from uridine 5-triphosphate), a reaction catalyzed by the N-terminal domain. The chain is Bifunctional protein GlmU from Sinorhizobium fredii (strain NBRC 101917 / NGR234).